The following is a 109-amino-acid chain: Iron-sulfur cluster assembly protein CyaY (109 aa).

This sequence belongs to the frataxin family.

Involved in iron-sulfur (Fe-S) cluster assembly. May act as a regulator of Fe-S biogenesis. The chain is Iron-sulfur cluster assembly protein CyaY from Burkholderia lata (strain ATCC 17760 / DSM 23089 / LMG 22485 / NCIMB 9086 / R18194 / 383).